We begin with the raw amino-acid sequence, 208 residues long: Putative archaetidylserine decarboxylase proenzyme (208 aa).

Catalysis depends on Ser-171, which acts as the Schiff-base intermediate with substrate; via pyruvic acid. Ser-171 is modified (pyruvic acid (Ser); by autocatalysis).

The protein belongs to the phosphatidylserine decarboxylase family. PSD-A subfamily. As to quaternary structure, heterodimer of a large membrane-associated beta subunit and a small pyruvoyl-containing alpha subunit. Pyruvate is required as a cofactor. Is synthesized initially as an inactive proenzyme. Formation of the active enzyme involves a self-maturation process in which the active site pyruvoyl group is generated from an internal serine residue via an autocatalytic post-translational modification. Two non-identical subunits are generated from the proenzyme in this reaction, and the pyruvate is formed at the N-terminus of the alpha chain, which is derived from the carboxyl end of the proenzyme. The post-translation cleavage follows an unusual pathway, termed non-hydrolytic serinolysis, in which the side chain hydroxyl group of the serine supplies its oxygen atom to form the C-terminus of the beta chain, while the remainder of the serine residue undergoes an oxidative deamination to produce ammonia and the pyruvoyl prosthetic group on the alpha chain.

It is found in the cell membrane. It catalyses the reaction archaetidylserine + H(+) = archaetidylethanolamine + CO2. In terms of biological role, catalyzes the formation of archaetidylethanolamine (PtdEtn) from archaetidylserine (PtdSer). In Methanococcoides burtonii (strain DSM 6242 / NBRC 107633 / OCM 468 / ACE-M), this protein is Putative archaetidylserine decarboxylase proenzyme.